A 243-amino-acid polypeptide reads, in one-letter code: uncharacterized protein (243 aa).

This sequence belongs to the ycf23 family.

Its subcellular location is the plastid. The protein localises to the cyanelle. This is an uncharacterized protein from Cyanophora paradoxa.